We begin with the raw amino-acid sequence, 94 residues long: DNA-directed RNA polymerase subunit omega (94 aa).

Belongs to the RNA polymerase subunit omega family. As to quaternary structure, the RNAP catalytic core consists of 2 alpha, 1 beta, 1 beta' and 1 omega subunit. When a sigma factor is associated with the core the holoenzyme is formed, which can initiate transcription.

It carries out the reaction RNA(n) + a ribonucleoside 5'-triphosphate = RNA(n+1) + diphosphate. Promotes RNA polymerase assembly. Latches the N- and C-terminal regions of the beta' subunit thereby facilitating its interaction with the beta and alpha subunits. In Photobacterium profundum (strain SS9), this protein is DNA-directed RNA polymerase subunit omega.